A 73-amino-acid chain; its full sequence is Potassium channel toxin alpha-KTx 27.1 (73 aa).

Residues 1-23 (MKFLFLTLFVCCFIAVLVIPSEA) form the signal peptide.

The protein belongs to the short scorpion toxin superfamily. Potassium channel inhibitor family. Alpha-KTx 27 subfamily. In terms of processing, contains 4 disulfide bonds. As to expression, expressed by the venom gland.

It is found in the secreted. The sequence is that of Potassium channel toxin alpha-KTx 27.1 from Buthus israelis (Israeli scorpion).